Here is a 421-residue protein sequence, read N- to C-terminus: UDP-N-acetylglucosamine 1-carboxyvinyltransferase (421 aa).

22–23 (KN) contributes to the phosphoenolpyruvate binding site. Residue Arg-94 coordinates UDP-N-acetyl-alpha-D-glucosamine. Catalysis depends on Cys-118, which acts as the Proton donor. At Cys-118 the chain carries 2-(S-cysteinyl)pyruvic acid O-phosphothioketal. Residues 163-166 (KVSV), Asp-308, and Ile-330 each bind UDP-N-acetyl-alpha-D-glucosamine.

The protein belongs to the EPSP synthase family. MurA subfamily.

It localises to the cytoplasm. The enzyme catalyses phosphoenolpyruvate + UDP-N-acetyl-alpha-D-glucosamine = UDP-N-acetyl-3-O-(1-carboxyvinyl)-alpha-D-glucosamine + phosphate. The protein operates within cell wall biogenesis; peptidoglycan biosynthesis. Its function is as follows. Cell wall formation. Adds enolpyruvyl to UDP-N-acetylglucosamine. This chain is UDP-N-acetylglucosamine 1-carboxyvinyltransferase, found in Orientia tsutsugamushi (strain Boryong) (Rickettsia tsutsugamushi).